The following is a 1143-amino-acid chain: Exportin-T (1143 aa).

The disordered stretch occupies residues alanine 566 to serine 593. Residues serine 576–serine 593 are compositionally biased toward polar residues.

This sequence belongs to the exportin family.

The protein localises to the nucleus. It is found in the cytoplasm. Its function is as follows. tRNA nucleus export receptor which facilitates tRNA translocation across the nuclear pore complex. Involved in pre-tRNA splicing, probably by affecting the interaction of pre-tRNA with splicing endonuclease. The sequence is that of Exportin-T (LOS1) from Cryptococcus neoformans var. neoformans serotype D (strain JEC21 / ATCC MYA-565) (Filobasidiella neoformans).